A 293-amino-acid chain; its full sequence is Pyridoxal 5'-phosphate synthase subunit PdxS (293 aa).

A D-ribose 5-phosphate-binding site is contributed by Asp-23. The active-site Schiff-base intermediate with D-ribose 5-phosphate is Lys-80. Gly-152 is a D-ribose 5-phosphate binding site. Residue Arg-164 coordinates D-glyceraldehyde 3-phosphate. Residues Gly-213 and 234 to 235 (GS) contribute to the D-ribose 5-phosphate site.

The protein belongs to the PdxS/SNZ family. As to quaternary structure, in the presence of PdxT, forms a dodecamer of heterodimers.

The catalysed reaction is aldehydo-D-ribose 5-phosphate + D-glyceraldehyde 3-phosphate + L-glutamine = pyridoxal 5'-phosphate + L-glutamate + phosphate + 3 H2O + H(+). It functions in the pathway cofactor biosynthesis; pyridoxal 5'-phosphate biosynthesis. Catalyzes the formation of pyridoxal 5'-phosphate from ribose 5-phosphate (RBP), glyceraldehyde 3-phosphate (G3P) and ammonia. The ammonia is provided by the PdxT subunit. Can also use ribulose 5-phosphate and dihydroxyacetone phosphate as substrates, resulting from enzyme-catalyzed isomerization of RBP and G3P, respectively. The chain is Pyridoxal 5'-phosphate synthase subunit PdxS from Chloroflexus aggregans (strain MD-66 / DSM 9485).